The following is a 124-amino-acid chain: Small ribosomal subunit protein bS6 (124 aa).

Positions 100 to 124 are disordered; the sequence is KERRAARQKTGETQENVSQEESSTN. Over residues 110–124 the composition is skewed to polar residues; sequence GETQENVSQEESSTN.

Belongs to the bacterial ribosomal protein bS6 family.

Binds together with bS18 to 16S ribosomal RNA. In Fervidobacterium nodosum (strain ATCC 35602 / DSM 5306 / Rt17-B1), this protein is Small ribosomal subunit protein bS6.